Here is a 1054-residue protein sequence, read N- to C-terminus: DNA-directed RNA polymerase subunit beta' (1054 aa).

The Mg(2+) site is built by Asp-383, Asp-385, and Asp-387. The Zn(2+) site is built by Cys-752, Cys-826, Cys-833, and Cys-836.

Belongs to the RNA polymerase beta' chain family. In terms of assembly, the RNAP catalytic core consists of 2 alpha, 1 beta, 1 beta' and 1 omega subunit. When a sigma factor is associated with the core the holoenzyme is formed, which can initiate transcription. Requires Mg(2+) as cofactor. Zn(2+) serves as cofactor.

It carries out the reaction RNA(n) + a ribonucleoside 5'-triphosphate = RNA(n+1) + diphosphate. In terms of biological role, DNA-dependent RNA polymerase catalyzes the transcription of DNA into RNA using the four ribonucleoside triphosphates as substrates. This is DNA-directed RNA polymerase subunit beta' from Weissella paramesenteroides (Leuconostoc paramesenteroides).